Reading from the N-terminus, the 472-residue chain is MNVTVSNEVTDELLGPFELSDDITLMDFMALIDFDENEQALWHNMRQLKSVDREKTLMQLGIVGESLVVVKAIKKKATEGSTTRASKASAKAAKAAAKAAAVARDTPAEQATTVSPVAQVPVAVSPAVTAAVPTQPTSPSGGPAAANDIITPEDEYIETFRKSLLNSPSLASNIPIPGVNQLIQDSQLFKQLIGPVLLHRRAQQQAANQMGTAQSEYVKLMSNPDDPSNQARISELINQQEIDEQLHKAMEYTPEVFASVNMLYINMEINGHPVKAFVDSGAQSTIMSTALAERTGLGRLVDKRFRGIARGVGKGEIIGRVHAAQVKIETQFIPCSFIVLDTNVDLLLGLDMLRRYQACVDLKENVLKIAGIVTPFLPEAEIPKHFDMDPSAEATNLPSTSPLGNQKAAPEARDAGVGSALLNRSTPATAERTHAEEDVRRLMDLGFSRAEVLKALDHSQGNAEYAAAFLFQ.

Residues methionine 1–alanine 72 enclose the Ubiquitin-like domain. Residue aspartate 279 is part of the active site. The interval methionine 388 to proline 410 is disordered. Polar residues predominate over residues glutamate 393–glycine 404. Positions histidine 434–glutamine 472 constitute a UBA domain.

Belongs to the DDI1 family. Binds ubiquitin and polyubiquitinated proteins.

It is found in the cytoplasm. Functionally, probable aspartic protease. May be involved in the regulation of exocytosis. Acts as a linker between the 19S proteasome and polyubiquitinated proteins via UBA domain interactions with ubiquitin for their subsequent degradation. Required for S-phase checkpoint control. This chain is DNA damage-inducible protein 1 (DDI1), found in Eremothecium gossypii (strain ATCC 10895 / CBS 109.51 / FGSC 9923 / NRRL Y-1056) (Yeast).